We begin with the raw amino-acid sequence, 1300 residues long: Zinc finger protein 536 (1300 aa).

Disordered stretches follow at residues 1 to 26 (MEEA…GPVL) and 47 to 77 (FPEL…GQPM). Positions 48–69 (PELHPRPNPEEKPPASLEEKAH) are enriched in basic and acidic residues. 6 consecutive C2H2-type zinc fingers follow at residues 130 to 152 (YPCP…MRTH), 158 to 180 (FKCP…LRTH), 274 to 297 (FRCT…RILH), 300 to 323 (YKCT…EKAH), 345 to 367 (FRCE…MRKH), and 373 to 395 (HCCQ…MKVH). 2 disordered regions span residues 584 to 604 (HSTK…LESS) and 650 to 739 (SRVH…QQPA). Over residues 594 to 604 (LPSKLDPLESS) the composition is skewed to basic and acidic residues. A C2H2-type 7 zinc finger spans residues 631-653 (TECPDCGRVFRTYHQVVVHSRVH). Residues 657-674 (RKGEEDGLHVGLDERRGS) show a composition bias toward basic and acidic residues. The segment covering 675–696 (GSDQESQSVSRSTTPGSSNVTE) has biased composition (polar residues). 2 consecutive C2H2-type zinc fingers follow at residues 751-773 (KDCP…LRIH) and 779-801 (YKCP…LERH). Positions 802 to 826 (HRERQNGAGPLSGQPPNQDHKDEMS) are disordered. Phosphoserine is present on residues serine 826 and serine 827. The segment covering 856–880 (SQQWTSGVLSSGDHSGQATGMSSEV) has biased composition (polar residues). Disordered stretches follow at residues 856-893 (SQQW…LPSK), 937-985 (KDKA…PDAA), and 1124-1260 (SGAS…SLDK). 2 stretches are compositionally biased toward basic and acidic residues: residues 950–972 (HGVD…EKSQ) and 1133–1143 (KEPDGKAHSEE). 2 stretches are compositionally biased toward acidic residues: residues 1160–1170 (DLSDIASSEDM) and 1178–1187 (NDEEDVETEP). Positions 1194–1209 (LSALSKDSSSDGGDSL) are enriched in low complexity.

The protein belongs to the krueppel C2H2-type zinc-finger protein family.

It localises to the nucleus. Its function is as follows. Transcriptional repressor that negatively regulates neuron differentiation by repressing retinoic acid-induced gene transcription. Binds and interrupts RARA from binding to retinoic acid response elements (RARE) composed of tandem 5'-AGGTCA-3' sites known as DR1-DR5. Recognizes and binds 2 copies of the core DNA sequence 5'-CCCCCA-3'. This chain is Zinc finger protein 536 (ZNF536), found in Homo sapiens (Human).